A 298-amino-acid polypeptide reads, in one-letter code: Nucleotide-binding protein GTNG_3015 (298 aa).

Residue 17–24 (GMSGAGKT) participates in ATP binding. GTP is bound at residue 68 to 71 (DLRS).

Belongs to the RapZ-like family.

Displays ATPase and GTPase activities. This chain is Nucleotide-binding protein GTNG_3015, found in Geobacillus thermodenitrificans (strain NG80-2).